The chain runs to 437 residues: O-methyltransferase 10 (437 aa).

Residues Gly259, Glu282, Asn315, and Met316 each contribute to the S-adenosyl-L-methionine site. His335 (proton acceptor) is an active-site residue.

It belongs to the class I-like SAM-binding methyltransferase superfamily. Cation-independent O-methyltransferase family. COMT subfamily.

It carries out the reaction (3,5-dichloro-2,4,6-trihydroxyphenyl)hexan-1-one + S-adenosyl-L-methionine = 1-(3,5-dichloro-2,6-dihydroxy-4-methoxyphenyl)hexan-1-one + S-adenosyl-L-homocysteine + H(+). This Dictyostelium discoideum (Social amoeba) protein is O-methyltransferase 10 (omt10).